We begin with the raw amino-acid sequence, 101 residues long: MSSTLIVQLDMRTLCQEADVTAECVIEIVEHGIVEPSGRTPEDWLFDDQAPLVTKRAVKLHQELELEWEGVALALELLQEVQQLRSENSMLKQRLGRFIQL.

Belongs to the CbpM family.

Interacts with CbpA and inhibits both the DnaJ-like co-chaperone activity and the DNA binding activity of CbpA. Together with CbpA, modulates the activity of the DnaK chaperone system. Does not inhibit the co-chaperone activity of DnaJ. In Pseudomonas putida (strain ATCC 47054 / DSM 6125 / CFBP 8728 / NCIMB 11950 / KT2440), this protein is Chaperone modulatory protein CbpM.